The sequence spans 793 residues: Potassium transporter 18 (793 aa).

Residues Met1 to Ser53 lie on the Cytoplasmic side of the membrane. Residues Leu54 to Pro74 form a helical membrane-spanning segment. Residues His75–Ala86 lie on the Extracellular side of the membrane. A helical membrane pass occupies residues Leu87–Leu107. Topologically, residues Arg108 to Asn172 are cytoplasmic. Residues Leu173 to Pro193 form a helical membrane-spanning segment. Over Ala194–Asp214 the chain is Extracellular. A helical transmembrane segment spans residues Val215–Thr235. Over Asp236 to Lys237 the chain is Cytoplasmic. The chain crosses the membrane as a helical span at residues Val238–Ala258. At Val259–Ser287 the chain is on the extracellular side. A helical transmembrane segment spans residues Trp288 to Leu308. Ser309 is a topological domain (cytoplasmic). The chain crosses the membrane as a helical span at residues Tyr310–Leu330. The Extracellular segment spans residues Gln331–Tyr351. A helical transmembrane segment spans residues Ile352 to Val372. At Ala373–Gln409 the chain is on the cytoplasmic side. A helical transmembrane segment spans residues Ile410–Phe430. Residues Lys431–Thr442 lie on the Extracellular side of the membrane. Asn432 is a glycosylation site (N-linked (GlcNAc...) asparagine). The helical transmembrane segment at Ala443–Trp463 threads the bilayer. Topologically, residues Arg464–Thr468 are cytoplasmic. Residues Leu469 to Val489 traverse the membrane as a helical segment. Topologically, residues Arg490–Gln494 are extracellular. Residues Gly495–Tyr515 form a helical membrane-spanning segment. The Cytoplasmic segment spans residues Gly516–Val793.

The protein belongs to the HAK/KUP transporter (TC 2.A.72.3) family.

Its subcellular location is the membrane. Functionally, high-affinity potassium transporter. The polypeptide is Potassium transporter 18 (HAK18) (Oryza sativa subsp. japonica (Rice)).